Here is a 109-residue protein sequence, read N- to C-terminus: Large ribosomal subunit protein uL22 (109 aa).

The protein belongs to the universal ribosomal protein uL22 family. In terms of assembly, part of the 50S ribosomal subunit.

In terms of biological role, this protein binds specifically to 23S rRNA; its binding is stimulated by other ribosomal proteins, e.g. L4, L17, and L20. It is important during the early stages of 50S assembly. It makes multiple contacts with different domains of the 23S rRNA in the assembled 50S subunit and ribosome. Functionally, the globular domain of the protein is located near the polypeptide exit tunnel on the outside of the subunit, while an extended beta-hairpin is found that lines the wall of the exit tunnel in the center of the 70S ribosome. The chain is Large ribosomal subunit protein uL22 from Neisseria gonorrhoeae (strain ATCC 700825 / FA 1090).